The sequence spans 262 residues: Hemin import ATP-binding protein HmuV (262 aa).

Residues 5-242 (LEARKAGFAT…ELIGAVFDVE (238 aa)) enclose the ABC transporter domain. ATP is bound at residue 37–44 (GPNGAGKS).

This sequence belongs to the ABC transporter superfamily. Heme (hemin) importer (TC 3.A.1.14.5) family. As to quaternary structure, the complex is composed of two ATP-binding proteins (HmuV), two transmembrane proteins (HmuU) and a solute-binding protein (HmuT).

It is found in the cell inner membrane. Part of the ABC transporter complex HmuTUV involved in hemin import. Responsible for energy coupling to the transport system. This chain is Hemin import ATP-binding protein HmuV, found in Rhodopseudomonas palustris (strain HaA2).